The following is a 400-amino-acid chain: Enoyl-[acyl-carrier-protein] reductase [NADH] 2 (400 aa).

NAD(+) is bound by residues 48–53, 75–76, 112–113, and 141–142; these read GASSGF, FE, DA, and LA. A substrate-binding site is contributed by tyrosine 228. Catalysis depends on tyrosine 238, which acts as the Proton donor. NAD(+) is bound by residues lysine 247 and 276–278; that span reads LVT.

This sequence belongs to the TER reductase family. Monomer.

It carries out the reaction a 2,3-saturated acyl-[ACP] + NAD(+) = a (2E)-enoyl-[ACP] + NADH + H(+). It functions in the pathway lipid metabolism; fatty acid biosynthesis. Involved in the final reduction of the elongation cycle of fatty acid synthesis (FAS II). Catalyzes the reduction of a carbon-carbon double bond in an enoyl moiety that is covalently linked to an acyl carrier protein (ACP). In Vibrio vulnificus (strain YJ016), this protein is Enoyl-[acyl-carrier-protein] reductase [NADH] 2.